A 135-amino-acid chain; its full sequence is Histone H3 (135 aa).

Positions 1–40 are disordered; it reads MARTKQTARKSTGGKAPRKAVATKARKTAPPVGGVKKPHR. Residues 19-31 are compositionally biased toward low complexity; that stretch reads KAVATKARKTAPP.

It belongs to the histone H3 family. As to quaternary structure, the nucleosome is a histone octamer containing two molecules each of H2A, H2B, H3 and H4 assembled in one H3-H4 heterotetramer and two H2A-H2B heterodimers. The octamer wraps approximately 147 bp of DNA.

The protein resides in the nucleus. Its subcellular location is the chromosome. Core component of nucleosome. Nucleosomes wrap and compact DNA into chromatin, limiting DNA accessibility to the cellular machineries which require DNA as a template. Histones thereby play a central role in transcription regulation, DNA repair, DNA replication and chromosomal stability. DNA accessibility is regulated via a complex set of post-translational modifications of histones, also called histone code, and nucleosome remodeling. This Mastigamoeba balamuthi (Phreatamoeba balamuthi) protein is Histone H3.